We begin with the raw amino-acid sequence, 240 residues long: Sugar fermentation stimulation protein homolog (240 aa).

It belongs to the SfsA family.

The chain is Sugar fermentation stimulation protein homolog from Saccharolobus islandicus (strain M.14.25 / Kamchatka #1) (Sulfolobus islandicus).